The following is an 89-amino-acid chain: uncharacterized protein (89 aa).

Transmembrane regions (helical) follow at residues 11 to 31 and 63 to 83; these read IFGA…PIAL and AAIS…TVVF.

It localises to the cell membrane. This is an uncharacterized protein from Methanocaldococcus jannaschii (strain ATCC 43067 / DSM 2661 / JAL-1 / JCM 10045 / NBRC 100440) (Methanococcus jannaschii).